Reading from the N-terminus, the 223-residue chain is Octanoyltransferase (223 aa).

One can recognise a BPL/LPL catalytic domain in the interval 30–214 (DLDRDCFLLT…IVADLFGEFT (185 aa)). Substrate-binding positions include 75-82 (RGGEITYH), 144-146 (SIG), and 157-159 (GFA). Residue cysteine 175 is the Acyl-thioester intermediate of the active site.

Belongs to the LipB family.

The protein resides in the cytoplasm. It catalyses the reaction octanoyl-[ACP] + L-lysyl-[protein] = N(6)-octanoyl-L-lysyl-[protein] + holo-[ACP] + H(+). Its pathway is protein modification; protein lipoylation via endogenous pathway; protein N(6)-(lipoyl)lysine from octanoyl-[acyl-carrier-protein]: step 1/2. Functionally, catalyzes the transfer of endogenously produced octanoic acid from octanoyl-acyl-carrier-protein onto the lipoyl domains of lipoate-dependent enzymes. Lipoyl-ACP can also act as a substrate although octanoyl-ACP is likely to be the physiological substrate. This chain is Octanoyltransferase, found in Desulfotalea psychrophila (strain LSv54 / DSM 12343).